A 368-amino-acid chain; its full sequence is Polynucleotide 5'-hydroxyl-kinase NOL9 (368 aa).

Position 36–43 (36–43 (GPKNSGKS)) interacts with ATP.

The protein belongs to the Clp1 family. NOL9/GRC3 subfamily.

It is found in the nucleus. The protein resides in the nucleolus. In terms of biological role, polynucleotide 5'-kinase involved in rRNA processing. In Arabidopsis thaliana (Mouse-ear cress), this protein is Polynucleotide 5'-hydroxyl-kinase NOL9.